The primary structure comprises 343 residues: L-threonine 3-dehydrogenase (343 aa).

Cysteine 38 lines the Zn(2+) pocket. Active-site charge relay system residues include threonine 40 and histidine 43. Zn(2+) is bound by residues histidine 63, glutamate 64, cysteine 93, cysteine 96, cysteine 99, and cysteine 107. NAD(+)-binding positions include isoleucine 175, aspartate 195, arginine 200, 262–264, and 286–287; these read LGI and IY.

Belongs to the zinc-containing alcohol dehydrogenase family. In terms of assembly, homotetramer. The cofactor is Zn(2+).

The protein localises to the cytoplasm. It carries out the reaction L-threonine + NAD(+) = (2S)-2-amino-3-oxobutanoate + NADH + H(+). It functions in the pathway amino-acid degradation; L-threonine degradation via oxydo-reductase pathway; glycine from L-threonine: step 1/2. Catalyzes the NAD(+)-dependent oxidation of L-threonine to 2-amino-3-ketobutyrate. This Paraburkholderia xenovorans (strain LB400) protein is L-threonine 3-dehydrogenase.